Here is a 1239-residue protein sequence, read N- to C-terminus: Structural polyprotein (1239 aa).

The segment at 15–95 is disordered; it reads RPAPVQRYIP…KKKSKPGKRM (81 aa). The segment at 36 to 62 is host transcription inhibition; that stretch reads RGPSQLQQLVAALGALALQPKQKQKRA. The span at 38-56 shows a compositional bias: low complexity; that stretch reads PSQLQQLVAALGALALQPK. The short motif at 55-91 is the Nuclear localization signal element; that stretch reads PKQKQKRAQKKPKKTPPPKPKKTQKPKKPTQKKKSKP. Basic residues predominate over residues 57-95; that stretch reads QKQKRAQKKPKKTPPPKPKKTQKPKKPTQKKKSKPGKRM. The segment at 78-106 is binding to the viral RNA; that stretch reads QKPKKPTQKKKSKPGKRMRNCMKIENDCI. The ribosome-binding stretch occupies residues 91-105; that stretch reads PGKRMRNCMKIENDC. A disulfide bridge connects residues cysteine 105 and cysteine 120. Residues 105–253 enclose the Peptidase S3 domain; sequence CIFPVMLDGK…RITPEESVEW (149 aa). Histidine 131 (charge relay system) is an active-site residue. A Nuclear export signal motif is present at residues 136–146; sequence IDNPELAKLTF. Residues 147 to 152 form an interaction with spike glycoprotein E2 region; the sequence is KKSSKY. Aspartate 153 serves as the catalytic Charge relay system. The interval 175–185 is dimerization of the capsid protein; that stretch reads PEGHYNWHHGA. The Charge relay system role is filled by serine 205. Residues 211 to 215 are dimerization of the capsid protein; it reads DNTGK. Residues 254 to 269 form a functions as an uncleaved signal peptide for the precursor of protein E3/E2 region; sequence SAAALNITALCVLQNL. Cystine bridges form between cysteine 264/cysteine 273, cysteine 278/cysteine 282, cysteine 281/cysteine 313, cysteine 339/cysteine 443, cysteine 342/cysteine 348, cysteine 411/cysteine 425, cysteine 471/cysteine 585, cysteine 519/cysteine 545, and cysteine 521/cysteine 539. Asparagine 268 is a glycosylation site (N-linked (GlcNAc...) asparagine; by host). Residues 322–686 lie on the Extracellular side of the membrane; the sequence is SVAHFEAYKA…HYYDLYPYWT (365 aa). A helical transmembrane segment spans residues 687–707; that stretch reads ITVLASLGLLIVISSGFSCFL. Residues cysteine 705 and cysteine 708 are each lipidated (S-palmitoyl cysteine; by host). Residues 708–751 lie on the Cytoplasmic side of the membrane; it reads CSVARTKCLTPYQLAPGAQLPTFIALLCCAKSARADTLDDFSYL. Residues 710 to 714 form an interaction with the capsid protein region; it reads VARTK. S-palmitoyl cysteine; by host attachment occurs at residues cysteine 715, cysteine 735, and cysteine 736. Cysteine 715 and cysteine 736 are oxidised to a cystine. Residues 752–756 are Extracellular-facing; sequence WTNNQ. The helical transmembrane segment at 757 to 777 threads the bilayer; the sequence is AMFWLQLASPVAAFLCLSYCC. At 778–779 the chain is on the cytoplasmic side; that stretch reads RN. A helical membrane pass occupies residues 780 to 800; it reads LACCMKIFLGISGLCVIATQA. Topologically, residues 801–1216 are extracellular; the sequence is YEHSTTMPNQ…WQWLAHTTSG (416 aa). 4 cysteine pairs are disulfide-bonded: cysteine 849–cysteine 914, cysteine 862–cysteine 894, cysteine 863–cysteine 896, and cysteine 868–cysteine 878. The segment at 884–901 is E1 fusion peptide loop; that stretch reads VYPFMWGGAYCFCDTENS. N-linked (GlcNAc...) asparagine; by host glycosylation is found at asparagine 941, asparagine 1009, and asparagine 1070. 4 disulfide bridges follow: cysteine 1059-cysteine 1071, cysteine 1101-cysteine 1176, cysteine 1106-cysteine 1180, and cysteine 1128-cysteine 1170. A helical membrane pass occupies residues 1217 to 1237; the sequence is PLTILVVAIIVVVVVSIVVCA. The S-palmitoyl cysteine; by host moiety is linked to residue cysteine 1236. At 1238 to 1239 the chain is on the cytoplasmic side; it reads RH.

Homodimer. Homomultimer. Interacts with host karyopherin KPNA4; this interaction allows the nuclear import of the viral capsid protein. Interacts with spike glycoprotein E2. Interacts with host IRAK1; the interaction leads to inhibition of IRAK1-dependent signaling. As to quaternary structure, the precursor of protein E3/E2 and E1 form a heterodimer shortly after synthesis. In terms of assembly, interacts with spike glycoprotein E1. The precursor of protein E3/E2 and E1 form a heterodimer shortly after synthesis. Processing of the precursor of protein E3/E2 into E2 and E3 results in a heterodimer of the spike glycoproteins E2 and E1. Spike at virion surface are constituted of a trimer of E2-E1 heterodimers. After target cell attachment and endocytosis, E1 change conformation to form homotrimers. Interacts with 6K protein. Interacts with spike glycoprotein E1. Processing of the precursor of protein E3/E2 into E2 and E3 results in a heterodimer of the spike glycoproteins E2 and E1. Spike at virion surface are constituted of a trimer of E2-E1 heterodimers. Interacts with 6K protein. Interacts with host MXRA8; this interaction mediates virus entry. Interacts with the capsid protein. As to quaternary structure, oligomer. Interacts with spike glycoprotein E1. Interacts with spike glycoprotein E2. Post-translationally, structural polyprotein: Specific enzymatic cleavages in vivo yield mature proteins. Capsid protein is auto-cleaved during polyprotein translation, unmasking a signal peptide at the N-terminus of the precursor of E3/E2. The remaining polyprotein is then targeted to the host endoplasmic reticulum, where host signal peptidase cleaves it into pE2, 6K and E1 proteins. pE2 is further processed to mature E3 and E2 by host furin in trans-Golgi vesicle. Palmitoylated via thioester bonds. These palmitoylations may induce disruption of the C-terminus transmembrane. This would result in the reorientation of E2 C-terminus from lumenal to cytoplasmic side. In terms of processing, N-glycosylated. Post-translationally, palmitoylated via thioester bonds.

It localises to the virion. The protein resides in the host cytoplasm. Its subcellular location is the host cell membrane. It is found in the host nucleus. The protein localises to the virion membrane. It localises to the host Golgi apparatus. The protein resides in the host trans-Golgi network. Its subcellular location is the host endoplasmic reticulum. The catalysed reaction is Autocatalytic release of the core protein from the N-terminus of the togavirus structural polyprotein by hydrolysis of a -Trp-|-Ser- bond.. Forms an icosahedral capsid with a T=4 symmetry composed of 240 copies of the capsid protein surrounded by a lipid membrane through which penetrate 80 spikes composed of trimers of E1-E2 heterodimers. The capsid protein binds to the viral RNA genome at a site adjacent to a ribosome binding site for viral genome translation following genome release. Possesses a protease activity that results in its autocatalytic cleavage from the nascent structural protein. Following its self-cleavage, the capsid protein transiently associates with ribosomes, and within several minutes the protein binds to viral RNA and rapidly assembles into icosahedric core particles. The resulting nucleocapsid eventually associates with the cytoplasmic domain of the spike glycoprotein E2 at the cell membrane, leading to budding and formation of mature virions. In case of infection, new virions attach to target cells and after clathrin-mediated endocytosis their membrane fuses with the host endosomal membrane. This leads to the release of the nucleocapsid into the cytoplasm, followed by an uncoating event necessary for the genomic RNA to become accessible. The uncoating might be triggered by the interaction of capsid proteins with ribosomes. Binding of ribosomes would release the genomic RNA since the same region is genomic RNA-binding and ribosome-binding. Specifically inhibits interleukin-1 receptor-associated kinase 1/IRAK1-dependent signaling during viral entry, representing a means by which the alphaviruses may evade innate immune detection and activation prior to viral gene expression. In terms of biological role, provides the signal sequence for the translocation of the precursor of protein E3/E2 to the host endoplasmic reticulum. Furin-cleaved E3 remains associated with spike glycoprotein E1 and mediates pH protection of the latter during the transport via the secretory pathway. After virion release from the host cell, the assembly protein E3 is gradually released in the extracellular space. Its function is as follows. Plays a role in viral attachment to target host cell, by binding to the cell receptor MXRA8. Synthesized as a p62 precursor which is processed by furin at the cell membrane just before virion budding, giving rise to E2-E1 heterodimer. The p62-E1 heterodimer is stable, whereas E2-E1 is unstable and dissociate at low pH. p62 is processed at the last step, presumably to avoid E1 fusion activation before its final export to cell surface. E2 C-terminus contains a transitory transmembrane that would be disrupted by palmitoylation, resulting in reorientation of the C-terminal tail from lumenal to cytoplasmic side. This step is critical since E2 C-terminus is involved in budding by interacting with capsid proteins. This release of E2 C-terminus in cytoplasm occurs lately in protein export, and precludes premature assembly of particles at the endoplasmic reticulum membrane. Functionally, acts as a viroporin that participates in virus glycoprotein processing and transport to the plasma membrane, cell permeabilization and budding of viral particles. The cation channel is permeable to Na(+)&gt;K(+)&gt;Ca(2+) in vitro. Disrupts the calcium homeostasis of the cell, probably at the endoplasmic reticulum level. This leads to cytoplasmic calcium elevation. Because of its lipophilic properties, the 6K protein is postulated to influence the selection of lipids that interact with the transmembrane domains of the glycoproteins, which, in turn, affects the deformability of the bilayer required for the extreme curvature that occurs as budding proceeds. Present in low amount in virions, about 3% compared to viral glycoproteins. Class II viral fusion protein. Fusion activity is inactive as long as E1 is bound to E2 in mature virion. After virus attachment to target cell via host MXRA8 and endocytosis, acidification of the endosome induce dissociation of E1/E2 heterodimer and concomitant trimerization of the E1 subunits. This E1 trimer is fusion active, and promotes release of viral nucleocapsid in cytoplasm after endosome and viral membrane fusion. Efficient fusion requires the presence of cholesterol and sphingolipid in the target membrane. In Anopheles amictus (Common banded mosquito), this protein is Structural polyprotein.